The chain runs to 348 residues: S-adenosylmethionine:tRNA ribosyltransferase-isomerase (348 aa).

It belongs to the QueA family. As to quaternary structure, monomer.

It localises to the cytoplasm. The enzyme catalyses 7-aminomethyl-7-carbaguanosine(34) in tRNA + S-adenosyl-L-methionine = epoxyqueuosine(34) in tRNA + adenine + L-methionine + 2 H(+). It participates in tRNA modification; tRNA-queuosine biosynthesis. Transfers and isomerizes the ribose moiety from AdoMet to the 7-aminomethyl group of 7-deazaguanine (preQ1-tRNA) to give epoxyqueuosine (oQ-tRNA). The polypeptide is S-adenosylmethionine:tRNA ribosyltransferase-isomerase (Polynucleobacter asymbioticus (strain DSM 18221 / CIP 109841 / QLW-P1DMWA-1) (Polynucleobacter necessarius subsp. asymbioticus)).